Consider the following 487-residue polypeptide: Glutamyl-tRNA(Gln) amidotransferase subunit A (487 aa).

Residues Lys-74 and Ser-149 each act as charge relay system in the active site. The Acyl-ester intermediate role is filled by Ser-173.

This sequence belongs to the amidase family. GatA subfamily. As to quaternary structure, heterotrimer of A, B and C subunits.

It catalyses the reaction L-glutamyl-tRNA(Gln) + L-glutamine + ATP + H2O = L-glutaminyl-tRNA(Gln) + L-glutamate + ADP + phosphate + H(+). Allows the formation of correctly charged Gln-tRNA(Gln) through the transamidation of misacylated Glu-tRNA(Gln) in organisms which lack glutaminyl-tRNA synthetase. The reaction takes place in the presence of glutamine and ATP through an activated gamma-phospho-Glu-tRNA(Gln). The protein is Glutamyl-tRNA(Gln) amidotransferase subunit A of Synechococcus sp. (strain CC9311).